We begin with the raw amino-acid sequence, 1028 residues long: Pro-apoptotic serine protease nma111 (1028 aa).

Positions 1-46 are disordered; it reads MDLNGETSTKRKRSSVAAPAERPAKHLKPESSTLTPGDATPANGTV. Residues 82–266 form a serine protease region; it reads VVSIHFCQTC…AATDYFLPLD (185 aa). Active-site charge relay system residues include H120, D151, and S233. 2 PDZ domains span residues 305–377 and 876–957; these read PEWE…QRGG and VFCG…VTFD. The disordered stretch occupies residues 989 to 1028; it reads TVSHDRDRHKDGITPDAANLNPDAMDEVYEEVSDVEPEVD. A compositionally biased stretch (basic and acidic residues) spans 990–1001; that stretch reads VSHDRDRHKDGI. The segment covering 1012–1028 has biased composition (acidic residues); the sequence is AMDEVYEEVSDVEPEVD.

It belongs to the peptidase S1C family.

It is found in the nucleus. Nuclear serine protease which mediates apoptosis. In Neosartorya fischeri (strain ATCC 1020 / DSM 3700 / CBS 544.65 / FGSC A1164 / JCM 1740 / NRRL 181 / WB 181) (Aspergillus fischerianus), this protein is Pro-apoptotic serine protease nma111 (nma111).